A 545-amino-acid chain; its full sequence is CTP synthase (545 aa).

An amidoligase domain region spans residues methionine 1 to tyrosine 266. Serine 13 serves as a coordination point for CTP. Serine 13 lines the UTP pocket. Residues serine 14–isoleucine 19 and aspartate 71 each bind ATP. The Mg(2+) site is built by aspartate 71 and glutamate 140. CTP contacts are provided by residues aspartate 147–glutamate 149, lysine 187–glutamine 192, and lysine 223. UTP contacts are provided by residues lysine 187–glutamine 192 and lysine 223. Lysine 239–alanine 241 lines the ATP pocket. Residues arginine 292–lysine 543 form the Glutamine amidotransferase type-1 domain. Glycine 353 is an L-glutamine binding site. Cysteine 380 functions as the Nucleophile; for glutamine hydrolysis in the catalytic mechanism. Residues leucine 381–glutamine 384, glutamate 404, and arginine 471 contribute to the L-glutamine site. Catalysis depends on residues histidine 516 and glutamate 518.

Belongs to the CTP synthase family. As to quaternary structure, homotetramer.

The enzyme catalyses UTP + L-glutamine + ATP + H2O = CTP + L-glutamate + ADP + phosphate + 2 H(+). The catalysed reaction is L-glutamine + H2O = L-glutamate + NH4(+). It catalyses the reaction UTP + NH4(+) + ATP = CTP + ADP + phosphate + 2 H(+). It participates in pyrimidine metabolism; CTP biosynthesis via de novo pathway; CTP from UDP: step 2/2. Its activity is regulated as follows. Allosterically activated by GTP, when glutamine is the substrate; GTP has no effect on the reaction when ammonia is the substrate. The allosteric effector GTP functions by stabilizing the protein conformation that binds the tetrahedral intermediate(s) formed during glutamine hydrolysis. Inhibited by the product CTP, via allosteric rather than competitive inhibition. Functionally, catalyzes the ATP-dependent amination of UTP to CTP with either L-glutamine or ammonia as the source of nitrogen. Regulates intracellular CTP levels through interactions with the four ribonucleotide triphosphates. The sequence is that of CTP synthase from Acinetobacter baylyi (strain ATCC 33305 / BD413 / ADP1).